A 72-amino-acid chain; its full sequence is Translation initiation factor IF-1 (72 aa).

An S1-like domain is found at 1-72 (MSKEEAIEVE…TRGRITYRAK (72 aa)).

The protein belongs to the IF-1 family. In terms of assembly, component of the 30S ribosomal translation pre-initiation complex which assembles on the 30S ribosome in the order IF-2 and IF-3, IF-1 and N-formylmethionyl-tRNA(fMet); mRNA recruitment can occur at any time during PIC assembly.

Its subcellular location is the cytoplasm. Its function is as follows. One of the essential components for the initiation of protein synthesis. Stabilizes the binding of IF-2 and IF-3 on the 30S subunit to which N-formylmethionyl-tRNA(fMet) subsequently binds. Helps modulate mRNA selection, yielding the 30S pre-initiation complex (PIC). Upon addition of the 50S ribosomal subunit IF-1, IF-2 and IF-3 are released leaving the mature 70S translation initiation complex. This chain is Translation initiation factor IF-1, found in Geobacter sulfurreducens (strain ATCC 51573 / DSM 12127 / PCA).